Consider the following 388-residue polypeptide: Flap endonuclease 1 (388 aa).

The N-domain stretch occupies residues 1–104 (MGILGLSKLI…GELAKRAERR (104 aa)). D34 contacts Mg(2+). 2 residues coordinate DNA: R47 and R70. Residues D86, E158, E160, D179, and D181 each contribute to the Mg(2+) site. An I-domain region spans residues 122–253 (EIEKFNRRLV…KRAIELINNY (132 aa)). DNA is bound at residue E158. G231 and D233 together coordinate DNA. D233 lines the Mg(2+) pocket. The segment at 336 to 344 (TQVRLDSFF) is interaction with PCNA. The interval 343–388 (FFKTLPSTPSATNAAKRKAEEAKKSANNKKAKTSGGGGGGRGRRPK) is disordered.

Belongs to the XPG/RAD2 endonuclease family. FEN1 subfamily. Interacts with PCNA. Three molecules of FEN1 bind to one PCNA trimer with each molecule binding to one PCNA monomer. PCNA stimulates the nuclease activity without altering cleavage specificity. Mg(2+) is required as a cofactor. In terms of processing, phosphorylated. Phosphorylation upon DNA damage induces relocalization to the nuclear plasma.

It localises to the nucleus. The protein localises to the nucleolus. Its subcellular location is the nucleoplasm. The protein resides in the mitochondrion. Functionally, structure-specific nuclease with 5'-flap endonuclease and 5'-3' exonuclease activities involved in DNA replication and repair. During DNA replication, cleaves the 5'-overhanging flap structure that is generated by displacement synthesis when DNA polymerase encounters the 5'-end of a downstream Okazaki fragment. It enters the flap from the 5'-end and then tracks to cleave the flap base, leaving a nick for ligation. Also involved in the long patch base excision repair (LP-BER) pathway, by cleaving within the apurinic/apyrimidinic (AP) site-terminated flap. Acts as a genome stabilization factor that prevents flaps from equilibrating into structures that lead to duplications and deletions. Also possesses 5'-3' exonuclease activity on nicked or gapped double-stranded DNA, and exhibits RNase H activity. Also involved in replication and repair of rDNA and in repairing mitochondrial DNA. The polypeptide is Flap endonuclease 1 (Drosophila ananassae (Fruit fly)).